The chain runs to 402 residues: Glutamate N-acetyltransferase (402 aa).

Substrate contacts are provided by Thr146, Lys172, Thr185, Glu267, Asn397, and Thr402. Residue Thr185 is the Nucleophile of the active site.

It belongs to the ArgJ family. Heterotetramer of two alpha and two beta chains.

The protein localises to the cytoplasm. The catalysed reaction is N(2)-acetyl-L-ornithine + L-glutamate = N-acetyl-L-glutamate + L-ornithine. Its pathway is amino-acid biosynthesis; L-arginine biosynthesis; L-ornithine and N-acetyl-L-glutamate from L-glutamate and N(2)-acetyl-L-ornithine (cyclic): step 1/1. Its activity is regulated as follows. Competitively inhibited by L-ornithine. Catalyzes the transfer of the acetyl group from N(2)-acetylornithine to glutamate, forming N-acetylglutamate and L-ornithine. This chain is Glutamate N-acetyltransferase, found in Methanocaldococcus jannaschii (strain ATCC 43067 / DSM 2661 / JAL-1 / JCM 10045 / NBRC 100440) (Methanococcus jannaschii).